The following is a 148-amino-acid chain: Nodulation protein NolJ (148 aa).

The span at Ala66–Asp78 shows a compositional bias: acidic residues. Disordered regions lie at residues Ala66–Gly93 and Ala124–Gly148. The span at Ala124–Asn136 shows a compositional bias: low complexity.

Involved in efficiency of soybean nodulation and in nodulation delay. The sequence is that of Nodulation protein NolJ (nolJ) from Rhizobium fredii (Sinorhizobium fredii).